The primary structure comprises 249 residues: Sodium channel modifier 1 (249 aa).

The short motif at lysine 4–arginine 20 is the Bipartite nuclear localization signal element. Residues tyrosine 42 to tryptophan 74 form a Matrin-type zinc finger. Residues tyrosine 94–glutamate 103 show a composition bias toward basic and acidic residues. Disordered stretches follow at residues tyrosine 94–lysine 116, tyrosine 128–glutamate 199, and glutamate 228–serine 249. A compositionally biased stretch (polar residues) spans proline 104–arginine 115. A compositionally biased stretch (basic and acidic residues) spans lysine 134 to aspartate 149. Residues leucine 150–glutamine 170 show a composition bias toward polar residues. The segment covering valine 230 to proline 239 has biased composition (acidic residues).

As to quaternary structure, component of the minor spliceosome, which splices U12-type introns.

The protein resides in the nucleus. It is found in the nucleoplasm. Its subcellular location is the nucleus speckle. Functionally, as a component of the minor spliceosome, involved in the splicing of U12-type introns in pre-mRNAs. This is Sodium channel modifier 1 (scnm1) from Danio rerio (Zebrafish).